Here is a 299-residue protein sequence, read N- to C-terminus: Probable lipid kinase YegS (299 aa).

Residues 2-133 enclose the DAGKc domain; the sequence is ANFPASLLIL…IDMARVNDKT (132 aa). Residues threonine 40, 66 to 72, and threonine 95 contribute to the ATP site; that span reads GDGTINE. Mg(2+)-binding residues include leucine 215, aspartate 218, and leucine 220. The active-site Proton acceptor is the glutamate 271.

It belongs to the diacylglycerol/lipid kinase family. YegS lipid kinase subfamily. It depends on Mg(2+) as a cofactor. Ca(2+) is required as a cofactor.

Its subcellular location is the cytoplasm. Functionally, probably phosphorylates lipids; the in vivo substrate is unknown. This Salmonella newport (strain SL254) protein is Probable lipid kinase YegS.